The sequence spans 346 residues: Hydroxyproline O-galactosyltransferase HPGT3 (346 aa).

Positions 1–10 (MESLPTTVPS) are enriched in polar residues. The segment at 1 to 21 (MESLPTTVPSKSERRARSSKF) is disordered. The Cytoplasmic portion of the chain corresponds to 1-28 (MESLPTTVPSKSERRARSSKFSQSSSKP). The chain crosses the membrane as a helical; Signal-anchor for type II membrane protein span at residues 29–45 (SVIMAFFSCVAWLYVAG). Residues 46–346 (RLWQDAENRV…IRQDKVCSVA (301 aa)) lie on the Lumenal side of the membrane.

This sequence belongs to the glycosyltransferase 31 family. Mn(2+) is required as a cofactor. As to expression, expressed in roots, rosette leaves, cauline leaves, stems, flowers and siliques.

It is found in the golgi apparatus membrane. It participates in protein modification; protein glycosylation. In terms of biological role, possesses hydroxyproline O-galactosyltransferase activity. Transfers galactose from UDP-galactose to hydroxyproline residues in the arabinogalactan proteins (AGPs). Is specific for AGPs containing non-contiguous peptidyl hydroxyproline residues. The addition of galactose onto the peptidyl hydroxyproline residues in AGP core proteins represents the first committed step in arabinogalactan polysaccharide addition. AGP glycans play essential roles in both vegetative and reproductive plant growth. The sequence is that of Hydroxyproline O-galactosyltransferase HPGT3 from Arabidopsis thaliana (Mouse-ear cress).